The primary structure comprises 333 residues: Mitochondrial thiamine pyrophosphate carrier 1 (333 aa).

3 Solcar repeats span residues 12–115 (GSRL…ITQF), 129–215 (PPSV…LRPR), and 222–318 (PYSS…ALKL). A run of 6 helical transmembrane segments spans residues 17-35 (VTAA…IAPL), 96-112 (LLYV…YRSI), 135-155 (FIAG…LDLL), 190-209 (GLGP…FCVY), 221-238 (LPYS…SVMA), and 293-310 (GLTV…VTMW).

This sequence belongs to the mitochondrial carrier (TC 2.A.29) family.

The protein localises to the mitochondrion inner membrane. In terms of biological role, mitochondrial transporter that mediates uptake of thiamine pyrophosphate (ThPP) into mitochondria. The sequence is that of Mitochondrial thiamine pyrophosphate carrier 1 (tpc-1) from Neurospora crassa (strain ATCC 24698 / 74-OR23-1A / CBS 708.71 / DSM 1257 / FGSC 987).